Reading from the N-terminus, the 347-residue chain is Trace amine-associated receptor 4 (347 aa).

At Met-1 to Tyr-37 the chain is on the extracellular side. An N-linked (GlcNAc...) asparagine glycan is attached at Asn-20. Intrachain disulfides connect Cys-23-Cys-187 and Cys-106-Cys-191. Residues Leu-38–Ile-58 traverse the membrane as a helical segment. The Cytoplasmic portion of the chain corresponds to Ala-59–Asn-69. Residues Phe-70–Ser-90 traverse the membrane as a helical segment. At Met-91 to Ser-110 the chain is on the extracellular side. The chain crosses the membrane as a helical span at residues Cys-111 to Val-129. Residues Asp-130–Val-149 lie on the Cytoplasmic side of the membrane. Residues Val-150–Phe-170 form a helical membrane-spanning segment. Topologically, residues Ser-171 to Lys-197 are extracellular. The interval Leu-175 to Thr-188 is extracellular Loop 2 (ECL2). A helical membrane pass occupies residues Leu-198–Ile-218. Topologically, residues Tyr-219 to Lys-260 are cytoplasmic. Residues Thr-261 to Ile-281 form a helical membrane-spanning segment. Topologically, residues Thr-282–Asn-296 are extracellular. Residues Val-297–Tyr-317 form a helical membrane-spanning segment. Residues Pro-318–Pro-347 lie on the Cytoplasmic side of the membrane.

Belongs to the G-protein coupled receptor 1 family.

The protein localises to the cell membrane. Olfactory receptor specific for 2-phenylethylamine, a trace amine present at high concentration in the urine of carnivore species, playing a key role in fear and avoidance responses. 2-phenylethylamine acts as a kairomone in the chemical detection of carnivore odor and triggers fear in rats. This receptor is probably mediated by the G(s)-class of G-proteins which activate adenylate cyclase. The polypeptide is Trace amine-associated receptor 4 (Rattus norvegicus (Rat)).